The chain runs to 85 residues: uncharacterized protein (85 aa).

This is an uncharacterized protein from Gallid herpesvirus 2 (strain Chicken/Md5/ATCC VR-987) (GaHV-2).